We begin with the raw amino-acid sequence, 245 residues long: tRNA (guanine-N(1)-)-methyltransferase (245 aa).

S-adenosyl-L-methionine is bound by residues Gly111 and 131-136 (MGDYVL).

It belongs to the RNA methyltransferase TrmD family. In terms of assembly, homodimer.

It localises to the cytoplasm. It catalyses the reaction guanosine(37) in tRNA + S-adenosyl-L-methionine = N(1)-methylguanosine(37) in tRNA + S-adenosyl-L-homocysteine + H(+). Functionally, specifically methylates guanosine-37 in various tRNAs. In Staphylococcus epidermidis (strain ATCC 12228 / FDA PCI 1200), this protein is tRNA (guanine-N(1)-)-methyltransferase.